The sequence spans 197 residues: Phospholipid hydroperoxide glutathione peroxidase GPX4 (197 aa).

Position 40 is a phosphoserine (S40). The active site involves U73. A non-standard amino acid (selenocysteine) is located at residue U73.

The protein belongs to the glutathione peroxidase family. Monomer. Has a tendency to form higher mass oligomers. Interacts with FUNDC1; this interaction promotes GPX4 recruitment into mitochondria through TOM/TIM complex where it is degraded by mitophagy. Widely expressed with the highest levels in testis, heart, cerebrum, ileum, stomach, liver, jejunum and epididymis. Expressed primarily in testis and sperm midpiece (at protein level). Expressed in brain (at protein level). Expressed in heart, liver and kidney (at protein level). Expressed in retina, especially in inner segments of photoreceptor cells (at protein level). In terms of tissue distribution, highly expressed during embryogenesis. Down-regulated between 14.5 dpc and 17.5 dpc. As to expression, highly expressed during embryogenesis. In contrast to isoform Mitochondrial and isoform Nuclear, which are down-regulated between 14.5 dpc and 17.5 dpc, remains constant. Mainly expressed in sperm. Weakly expressed during embryogenesis. Down-regulated between 14.5 dpc and 17.5 dpc.

It localises to the mitochondrion. The protein resides in the cytoplasm. Its subcellular location is the nucleus. It catalyses the reaction a hydroperoxy polyunsaturated fatty acid + 2 glutathione = a hydroxy polyunsaturated fatty acid + glutathione disulfide + H2O. The enzyme catalyses 2 glutathione + H2O2 = glutathione disulfide + 2 H2O. It carries out the reaction tert-butyl hydroperoxide + 2 glutathione = tert-butanol + glutathione disulfide + H2O. The catalysed reaction is cumene hydroperoxide + 2 glutathione = 2-phenylpropan-2-ol + glutathione disulfide + H2O. It catalyses the reaction (9S)-hydroperoxy-(10E,12Z)-octadecadienoate + 2 glutathione = (9S)-hydroxy-(10E,12Z)-octadecadienoate + glutathione disulfide + H2O. The enzyme catalyses (13S)-hydroperoxy-(9Z,11E)-octadecadienoate + 2 glutathione = (13S)-hydroxy-(9Z,11E)-octadecadienoate + glutathione disulfide + H2O. It carries out the reaction (5S)-hydroperoxy-(6E,8Z,11Z,14Z)-eicosatetraenoate + 2 glutathione = (5S)-hydroxy-(6E,8Z,11Z,14Z)-eicosatetraenoate + glutathione disulfide + H2O. The catalysed reaction is (12R)-hydroperoxy-(5Z,8Z,10E,14Z)-eicosatetraenoate + 2 glutathione = (12R)-hydroxy-(5Z,8Z,10E,14Z)-eicosatetraenoate + glutathione disulfide + H2O. It catalyses the reaction (12S)-hydroperoxy-(5Z,8Z,10E,14Z)-eicosatetraenoate + 2 glutathione = (12S)-hydroxy-(5Z,8Z,10E,14Z)-eicosatetraenoate + glutathione disulfide + H2O. The enzyme catalyses (15S)-hydroperoxy-(5Z,8Z,11Z,13E)-eicosatetraenoate + 2 glutathione = (15S)-hydroxy-(5Z,8Z,11Z,13E)-eicosatetraenoate + glutathione disulfide + H2O. It carries out the reaction (5S)-hydroperoxy-(6E,8Z,11Z,14Z,17Z)-eicosapentaenoate + 2 glutathione = (5S)-hydroxy-(6E,8Z,11Z,14Z,17Z)-eicosapentaenoate + glutathione disulfide + H2O. The catalysed reaction is (12S)-hydroperoxy-(5Z,8Z,10E,14Z,17Z)-eicosapentaenoate + 2 glutathione = (12S)-hydroxy-(5Z,8Z,10E,14Z,17Z)-eicosapentaenoate + glutathione disulfide + H2O. It catalyses the reaction (15S)-hydroperoxy-(5Z,8Z,11Z,13E,17Z)-eicosapentaenoate + 2 glutathione = (15S)-hydroxy-(5Z,8Z,11Z,13E,17Z)-eicosapentaenoate + glutathione disulfide + H2O. The enzyme catalyses (15S)-hydroperoxy-(11Z,13E)-eicosadienoate + 2 glutathione = (15S)-hydroxy-(11Z,13E)-eicosadienoate + glutathione disulfide + H2O. It carries out the reaction (17S)-hydroperoxy-(4Z,7Z,10Z,13Z,15E,19Z)-docosahexaenoate + 2 glutathione = (17S)-hydroxy-(4Z,7Z,10Z,13Z,15E,19Z)-docosahexaenoate + glutathione disulfide + H2O. The catalysed reaction is a hydroperoxy-1,2-diacyl-glycero-3-phosphocholine + 2 glutathione = a hydroxy-1,2-diacyl-glycero-3-phosphocholine + glutathione disulfide + H2O. Essential antioxidant peroxidase that directly reduces phospholipid hydroperoxide even if they are incorporated in membranes and lipoproteins. Can also reduce fatty acid hydroperoxide, cholesterol hydroperoxide and thymine hydroperoxide. Plays a key role in protecting cells from oxidative damage by preventing membrane lipid peroxidation. Required to prevent cells from ferroptosis, a non-apoptotic cell death resulting from an iron-dependent accumulation of lipid reactive oxygen species. The presence of selenocysteine (Sec) versus Cys at the active site is essential for life: it provides resistance to overoxidation and prevents cells against ferroptosis. The presence of Sec at the active site is also essential for the survival of a specific type of parvalbumin-positive interneurons, thereby preventing against fatal epileptic seizures. May be required to protect cells from the toxicity of ingested lipid hydroperoxides. Required for normal sperm development and male fertility. Essential for maturation and survival of photoreceptor cells. Plays a role in a primary T-cell response to viral and parasitic infection by protecting T-cells from ferroptosis and by supporting T-cell expansion. Plays a role of glutathione peroxidase in platelets in the arachidonic acid metabolism. Reduces hydroperoxy ester lipids formed by a 15-lipoxygenase that may play a role as down-regulator of the cellular 15-lipoxygenase pathway. Can also reduce small soluble hydroperoxides such as H2O2 and tert-butyl hydroperoxide. In terms of biological role, specifically able to suppress the production of leukotriene and prostaglandin in response to several stimuli by reducing fatty acid hydroperoxide. Its function is as follows. Specifically required to prevent mitochondrial cell death by mediating reduction of cardiolipin hydroperoxide. Also required for normal sperm development and male fertility. Functionally, required for male fertility by stabilizing the condensed chromatin in sperm nuclei. The sequence is that of Phospholipid hydroperoxide glutathione peroxidase GPX4 from Mus musculus (Mouse).